A 319-amino-acid chain; its full sequence is MSLNFLDFEQPIAELEAKIDSLTAVSRQDEKLDINLDEEVQRLREKSVELTRKIFSDLGAWQIAQLARHPRRPYTLDYIANIFTDFEELAGDRAYADDKAIVGGIARLDGRPVMIIGHQKGRETKEKIRRNFGMPAPEGYRKALRLMEMAERFKLPIITFIDTPGAYPGVGAEERGQSEAIARNLREMSRLNVPIVCTVIGEGGSGGALAIGVGDKVNMLQYSTYSVISPEGCASILWKSADKAPLAAEAMGITAHRLKELKMIDSVIPEPLGGAHRDYLAIAASLKAQLLADLSDLDVLNDEELLNRRYQRLMNYGYC.

The 262-residue stretch at 35-296 (NLDEEVQRLR…KAQLLADLSD (262 aa)) folds into the CoA carboxyltransferase C-terminal domain.

It belongs to the AccA family. As to quaternary structure, acetyl-CoA carboxylase is a heterohexamer composed of biotin carboxyl carrier protein (AccB), biotin carboxylase (AccC) and two subunits each of ACCase subunit alpha (AccA) and ACCase subunit beta (AccD).

The protein localises to the cytoplasm. The catalysed reaction is N(6)-carboxybiotinyl-L-lysyl-[protein] + acetyl-CoA = N(6)-biotinyl-L-lysyl-[protein] + malonyl-CoA. The protein operates within lipid metabolism; malonyl-CoA biosynthesis; malonyl-CoA from acetyl-CoA: step 1/1. Its function is as follows. Component of the acetyl coenzyme A carboxylase (ACC) complex. First, biotin carboxylase catalyzes the carboxylation of biotin on its carrier protein (BCCP) and then the CO(2) group is transferred by the carboxyltransferase to acetyl-CoA to form malonyl-CoA. The sequence is that of Acetyl-coenzyme A carboxylase carboxyl transferase subunit alpha from Yersinia enterocolitica serotype O:8 / biotype 1B (strain NCTC 13174 / 8081).